A 246-amino-acid chain; its full sequence is 4-hydroxy-tetrahydrodipicolinate reductase (246 aa).

Position 7-12 (7-12 (GCSGRM)) interacts with NAD(+). Arg34 lines the NADP(+) pocket. NAD(+) contacts are provided by residues 76-78 (ATT) and 102-105 (CPNT). Catalysis depends on His135, which acts as the Proton donor/acceptor. Residue His136 participates in (S)-2,3,4,5-tetrahydrodipicolinate binding. Lys139 acts as the Proton donor in catalysis. 145–146 (GT) serves as a coordination point for (S)-2,3,4,5-tetrahydrodipicolinate.

It belongs to the DapB family.

Its subcellular location is the cytoplasm. It catalyses the reaction (S)-2,3,4,5-tetrahydrodipicolinate + NAD(+) + H2O = (2S,4S)-4-hydroxy-2,3,4,5-tetrahydrodipicolinate + NADH + H(+). The enzyme catalyses (S)-2,3,4,5-tetrahydrodipicolinate + NADP(+) + H2O = (2S,4S)-4-hydroxy-2,3,4,5-tetrahydrodipicolinate + NADPH + H(+). It functions in the pathway amino-acid biosynthesis; L-lysine biosynthesis via DAP pathway; (S)-tetrahydrodipicolinate from L-aspartate: step 4/4. Catalyzes the conversion of 4-hydroxy-tetrahydrodipicolinate (HTPA) to tetrahydrodipicolinate. This is 4-hydroxy-tetrahydrodipicolinate reductase from Chlamydia felis (strain Fe/C-56) (Chlamydophila felis).